A 1281-amino-acid polypeptide reads, in one-letter code: Protein ETHYLENE-INSENSITIVE 2 (1281 aa).

The Cytoplasmic segment spans residues 1–21 (MDGQQLRSSESPASGGGGVTG). A helical transmembrane segment spans residues 22–42 (GGAPHLFHALGPALLISIGYI). The Extracellular segment spans residues 43–61 (DLGKWVAAVEAGSRFGLDL). A helical transmembrane segment spans residues 62-82 (VLLALLFNFMAILCQYLAACI). Residues 83 to 112 (GTVTGRSLAEICHQEYSRPTCIFLGVQAGL) are Cytoplasmic-facing. Residues 113-133 (SLLTSELTMIFGIALGFNLLF) traverse the membrane as a helical segment. Residues 134-137 (EYDD) are Extracellular-facing. The chain crosses the membrane as a helical span at residues 138–158 (LITGICFATVVPNLLPYAISH). Residues 159–163 (LGKKM) lie on the Cytoplasmic side of the membrane. A helical transmembrane segment spans residues 164-184 (VGTLNACIAGFALLCYVLGLL). At 185-208 (VSQPQIPLTTNVIFPKLSGESAYS) the chain is on the extracellular side. Residues 209 to 229 (LMALLGANVMAHNFYIHSSVV) form a helical membrane-spanning segment. Topologically, residues 230–238 (QGQKRSAFA) are cytoplasmic. Residues 239–259 (VGALFHDHLFSVLFIFTGIFL) form a helical membrane-spanning segment. Topologically, residues 260 to 297 (VNHVLMNSAAADSTNTLLLTFQDVVELMNQIFVNPMAP) are extracellular. A helical membrane pass occupies residues 298–318 (TIFLVVLLFSSHIISLTSAIG). Topologically, residues 319-325 (SQVISQH) are cytoplasmic. A helical membrane pass occupies residues 326–346 (LFGINLPLSGHHLILKAFAIV). The Extracellular portion of the chain corresponds to 347–362 (PALYCAKVAGAEGIYQ). A helical transmembrane segment spans residues 363-383 (LLIICQIIQAMLLPSSVVPLF). Over 384 to 400 (RVASSRLIMGAHRVSLH) the chain is Cytoplasmic. The chain crosses the membrane as a helical span at residues 401 to 421 (LEILTFLAFLLMLFSNIIFMA). At 422-447 (EMLFGDSGWLNTLKGNTGSPVVFPST) the chain is on the extracellular side. Residues 448–468 (VLITVACVSVAFSLYMAVTPL) form a helical membrane-spanning segment. At 469 to 1281 (KSGSHEAELQ…KRRLSSKGQQ (813 aa)) the chain is on the cytoplasmic side. Disordered stretches follow at residues 540–565 (IESDHDSQHSTAHTSTAPESCHSPSF) and 593–665 (ESTV…NGSG). Polar residues predominate over residues 548–557 (HSTAHTSTAP). Positions 599 to 610 (VDSKSTGERDIE) are enriched in basic and acidic residues.

This sequence belongs to the NRAMP (TC 2.A.55) family. As to expression, expressed in roots, leaf sheaths, leaf blades, flowers, developing seeds, germinating seeds and young seedlings. Expressed in adventitious roots, vascular tissues of the seminal roots, lateral roots, the connecting region between vascular tissues and lateral roots, mature leaf, mature stem, tips of adventitious roots derived from the node, shoot apex, young panicle, anthers, pistil, stigma, ovary, seed coat and fruit coat pericarp.

The protein resides in the membrane. Its function is as follows. Central factor in ethylene signaling pathways that control development, senescence and grain size. Acts as a positive component of the ethylene-signaling pathway. This is Protein ETHYLENE-INSENSITIVE 2 from Oryza sativa subsp. japonica (Rice).